Consider the following 267-residue polypeptide: uncharacterized protein (267 aa).

The protein to S.pombe SpAC18G6.12c.

This is an uncharacterized protein from Schizosaccharomyces pombe (strain 972 / ATCC 24843) (Fission yeast).